We begin with the raw amino-acid sequence, 255 residues long: tRNA (guanine-N(7)-)-methyltransferase (255 aa).

A disordered region spans residues 1-31 (MMHDDPNEAGLPPHNDAIPDETAEGADEVNP). The span at 18-27 (IPDETAEGAD) shows a compositional bias: acidic residues. S-adenosyl-L-methionine contacts are provided by Glu-86, Glu-111, Asp-138, and Asp-161. The active site involves Asp-161. Substrate contacts are provided by residues Lys-165, Asp-197, and 232-235 (TKFE).

It belongs to the class I-like SAM-binding methyltransferase superfamily. TrmB family.

It catalyses the reaction guanosine(46) in tRNA + S-adenosyl-L-methionine = N(7)-methylguanosine(46) in tRNA + S-adenosyl-L-homocysteine. It participates in tRNA modification; N(7)-methylguanine-tRNA biosynthesis. Catalyzes the formation of N(7)-methylguanine at position 46 (m7G46) in tRNA. This is tRNA (guanine-N(7)-)-methyltransferase from Burkholderia cenocepacia (strain HI2424).